The primary structure comprises 500 residues: Lysine--tRNA ligase (500 aa).

Mg(2+) contacts are provided by Glu-411 and Glu-418.

It belongs to the class-II aminoacyl-tRNA synthetase family. In terms of assembly, homodimer. The cofactor is Mg(2+).

Its subcellular location is the cytoplasm. The catalysed reaction is tRNA(Lys) + L-lysine + ATP = L-lysyl-tRNA(Lys) + AMP + diphosphate. The sequence is that of Lysine--tRNA ligase from Actinobacillus pleuropneumoniae serotype 7 (strain AP76).